Reading from the N-terminus, the 528-residue chain is Putative pumilio homolog 10 (528 aa).

Residues 188–528 form the PUM-HD domain; the sequence is EGSGASYPDE…KIFSKTILKK (341 aa). 8 Pumilio repeats span residues 213–248, 249–284, 285–323, 325–360, 361–396, 397–433, 434–465, and 466–503; these read EIYG…VIFL, EIID…MIVS, VLTS…ALVK, ALEP…FVVE, AATE…RLVA, EISR…LPFR, THCI…EIVR, and ELLS…RLVE.

The protein localises to the cytoplasm. In terms of biological role, sequence-specific RNA-binding protein that regulates translation and mRNA stability by binding the 3'-UTR of target mRNAs. The sequence is that of Putative pumilio homolog 10 (APUM10) from Arabidopsis thaliana (Mouse-ear cress).